Consider the following 367-residue polypeptide: Aldo-keto reductase AMT2 (367 aa).

Aspartate 76 is a binding site for NADP(+). Catalysis depends on tyrosine 81, which acts as the Proton donor. Residue histidine 173 participates in substrate binding. Residues 203-204 (SS), glutamine 229, 258-268 (GPLAAGKLARP), and 330-338 (SSVERMDEV) each bind NADP(+). Positions 346 to 367 (LSDEEESRLEDPYKAQPPQGHS) are disordered.

It belongs to the aldo/keto reductase family.

Its pathway is mycotoxin biosynthesis. Aldo-keto reductase; part of the gene clusters that mediate the biosynthesis of AM-toxins, host-selective toxins (HSTs) causing Alternaria blotch on apple, a worldwide distributed disease. AM-toxins are cyclic depsipeptides containing the 3 residues 2-hydroxy-isovaleric acid (2-HIV), dehydroalanine, L-alanine which are common for all 3 AM-toxins I to III. The fourth precursor is L-alpha-amino-methoxyphenyl-valeric acid (L-Amv) for AM-toxin I, L-alpha-amino-phenyl-valeric acid (L-Apv) for AM-toxin II, and L-alpha-amino-hydroxyphenyl-valeric acid (L-Ahv) for AM-toxin III. AM-toxins have two target sites for affecting susceptible apple cells; they cause invagination of the plasma membrane and electrolyte loss and chloroplast disorganization. The non-ribosomal peptide synthetase AMT1 contains 4 catalytic modules and is responsible for activation of each residue in AM-toxin. The aldo-keto reductase AMT2 catalyzes the conversion of 2-keto-isovaleric acid (2-KIV) to 2-hydroxy-isovaleric acid (2-HIV), one of the precursor residues incorporated by AMT1 during AM-toxin biosynthesis, by reduction of its ketone to an alcohol. The cytochrome P450 monooxygenase AMT3 and the thioesterase AMT4 are also important for AM-toxin production, but their exact function within the AM-toxin biosynthesis are not known yet. Up to 21 proteins (including AMT1 to AMT4) are predicted to be involved in AM-toxin biosynthesis since their expression ishighly up-regulated in AM-toxin-producing cultures. This chain is Aldo-keto reductase AMT2, found in Alternaria alternata (Alternaria rot fungus).